The chain runs to 443 residues: Glucose-6-phosphate isomerase (443 aa).

The active-site Proton donor is E285. Catalysis depends on residues H306 and K420.

Belongs to the GPI family.

It localises to the cytoplasm. It catalyses the reaction alpha-D-glucose 6-phosphate = beta-D-fructose 6-phosphate. It participates in carbohydrate biosynthesis; gluconeogenesis. Its pathway is carbohydrate degradation; glycolysis; D-glyceraldehyde 3-phosphate and glycerone phosphate from D-glucose: step 2/4. In terms of biological role, catalyzes the reversible isomerization of glucose-6-phosphate to fructose-6-phosphate. The protein is Glucose-6-phosphate isomerase of Staphylococcus epidermidis (strain ATCC 12228 / FDA PCI 1200).